A 190-amino-acid polypeptide reads, in one-letter code: Potassium-transporting ATPase KdpC subunit (190 aa).

The chain crosses the membrane as a helical span at residues 9 to 29 (VMFILFTIICGGIYPSVVTGI).

This sequence belongs to the KdpC family. As to quaternary structure, the system is composed of three essential subunits: KdpA, KdpB and KdpC.

It localises to the cell inner membrane. In terms of biological role, part of the high-affinity ATP-driven potassium transport (or Kdp) system, which catalyzes the hydrolysis of ATP coupled with the electrogenic transport of potassium into the cytoplasm. This subunit acts as a catalytic chaperone that increases the ATP-binding affinity of the ATP-hydrolyzing subunit KdpB by the formation of a transient KdpB/KdpC/ATP ternary complex. In Citrifermentans bemidjiense (strain ATCC BAA-1014 / DSM 16622 / JCM 12645 / Bem) (Geobacter bemidjiensis), this protein is Potassium-transporting ATPase KdpC subunit.